The sequence spans 66 residues: Large ribosomal subunit protein bL35 (66 aa).

Belongs to the bacterial ribosomal protein bL35 family.

This is Large ribosomal subunit protein bL35 from Treponema pallidum (strain Nichols).